The primary structure comprises 518 residues: Probable lysine--tRNA ligase, cytoplasmic (518 aa).

It belongs to the class-II aminoacyl-tRNA synthetase family. In terms of assembly, homodimer.

Its subcellular location is the cytoplasm. It catalyses the reaction tRNA(Lys) + L-lysine + ATP = L-lysyl-tRNA(Lys) + AMP + diphosphate. The sequence is that of Probable lysine--tRNA ligase, cytoplasmic from Enterocytozoon bieneusi (strain H348) (Microsporidian parasite).